The following is a 649-amino-acid chain: DNA mismatch repair protein MutL (649 aa).

A disordered region spans residues 339-414; the sequence is KKKTKDESVQ…VREEESWQST (76 aa). Residues 342–360 are compositionally biased toward basic and acidic residues; that stretch reads TKDESVQEQFHFEHTKPKE. The segment covering 388–402 has biased composition (low complexity); the sequence is PQLWQQPKQEWQPPQ.

Belongs to the DNA mismatch repair MutL/HexB family.

Its function is as follows. This protein is involved in the repair of mismatches in DNA. It is required for dam-dependent methyl-directed DNA mismatch repair. May act as a 'molecular matchmaker', a protein that promotes the formation of a stable complex between two or more DNA-binding proteins in an ATP-dependent manner without itself being part of a final effector complex. In Bacillus cytotoxicus (strain DSM 22905 / CIP 110041 / 391-98 / NVH 391-98), this protein is DNA mismatch repair protein MutL.